The chain runs to 255 residues: Diphthine synthase (255 aa).

Residues L9, D85, V88, 113 to 114, L164, A207, and H232 contribute to the S-adenosyl-L-methionine site; that span reads SI.

The protein belongs to the diphthine synthase family. Homodimer.

It carries out the reaction 2-[(3S)-amino-3-carboxypropyl]-L-histidyl-[translation elongation factor 2] + 3 S-adenosyl-L-methionine = diphthine-[translation elongation factor 2] + 3 S-adenosyl-L-homocysteine + 3 H(+). The protein operates within protein modification; peptidyl-diphthamide biosynthesis. S-adenosyl-L-methionine-dependent methyltransferase that catalyzes the trimethylation of the amino group of the modified target histidine residue in translation elongation factor 2 (EF-2), to form an intermediate called diphthine. The three successive methylation reactions represent the second step of diphthamide biosynthesis. This chain is Diphthine synthase, found in Methanococcus maripaludis (strain C6 / ATCC BAA-1332).